The following is a 192-amino-acid chain: Transcription termination/antitermination protein NusG (192 aa).

The region spanning 140 to 168 (VGEIVIVTDGPFETFTGTVEEIDQEKNRL) is the KOW domain.

It belongs to the NusG family.

Participates in transcription elongation, termination and antitermination. This is Transcription termination/antitermination protein NusG from Rickettsia felis (strain ATCC VR-1525 / URRWXCal2) (Rickettsia azadi).